The chain runs to 195 residues: UPF0301 protein CCNA_03506 (195 aa).

The protein belongs to the UPF0301 (AlgH) family.

The protein is UPF0301 protein CCNA_03506 of Caulobacter vibrioides (strain NA1000 / CB15N) (Caulobacter crescentus).